The sequence spans 184 residues: Photosystem I assembly protein Ycf4 (184 aa).

2 helical membrane-spanning segments follow: residues 19–39 (ISNF…LLVG) and 57–77 (IIFF…LFIS).

It belongs to the Ycf4 family.

The protein localises to the plastid. It localises to the chloroplast thylakoid membrane. Functionally, seems to be required for the assembly of the photosystem I complex. The polypeptide is Photosystem I assembly protein Ycf4 (Cucumis sativus (Cucumber)).